The chain runs to 298 residues: Bifunctional protein FolD (298 aa).

NADP(+) is bound by residues 167 to 169, Ser192, and Ile233; that span reads GRS.

The protein belongs to the tetrahydrofolate dehydrogenase/cyclohydrolase family. In terms of assembly, homodimer.

It catalyses the reaction (6R)-5,10-methylene-5,6,7,8-tetrahydrofolate + NADP(+) = (6R)-5,10-methenyltetrahydrofolate + NADPH. The enzyme catalyses (6R)-5,10-methenyltetrahydrofolate + H2O = (6R)-10-formyltetrahydrofolate + H(+). The protein operates within one-carbon metabolism; tetrahydrofolate interconversion. Its function is as follows. Catalyzes the oxidation of 5,10-methylenetetrahydrofolate to 5,10-methenyltetrahydrofolate and then the hydrolysis of 5,10-methenyltetrahydrofolate to 10-formyltetrahydrofolate. This Caulobacter sp. (strain K31) protein is Bifunctional protein FolD.